A 255-amino-acid polypeptide reads, in one-letter code: 5'-nucleotidase SurE (255 aa).

Residues Asp-8, Asp-9, Ser-39, and Asn-91 each contribute to the a divalent metal cation site.

This sequence belongs to the SurE nucleotidase family. A divalent metal cation serves as cofactor.

The protein localises to the cytoplasm. The catalysed reaction is a ribonucleoside 5'-phosphate + H2O = a ribonucleoside + phosphate. In terms of biological role, nucleotidase that shows phosphatase activity on nucleoside 5'-monophosphates. In Nitrosospira multiformis (strain ATCC 25196 / NCIMB 11849 / C 71), this protein is 5'-nucleotidase SurE.